Reading from the N-terminus, the 321-residue chain is Lipoyl synthase (321 aa).

7 residues coordinate [4Fe-4S] cluster: Cys-68, Cys-73, Cys-79, Cys-94, Cys-98, Cys-101, and Ser-308. In terms of domain architecture, Radical SAM core spans 80-297; the sequence is FNHGTATFMI…KEEAMAMGFT (218 aa).

Belongs to the radical SAM superfamily. Lipoyl synthase family. The cofactor is [4Fe-4S] cluster.

The protein localises to the cytoplasm. It carries out the reaction [[Fe-S] cluster scaffold protein carrying a second [4Fe-4S](2+) cluster] + N(6)-octanoyl-L-lysyl-[protein] + 2 oxidized [2Fe-2S]-[ferredoxin] + 2 S-adenosyl-L-methionine + 4 H(+) = [[Fe-S] cluster scaffold protein] + N(6)-[(R)-dihydrolipoyl]-L-lysyl-[protein] + 4 Fe(3+) + 2 hydrogen sulfide + 2 5'-deoxyadenosine + 2 L-methionine + 2 reduced [2Fe-2S]-[ferredoxin]. It functions in the pathway protein modification; protein lipoylation via endogenous pathway; protein N(6)-(lipoyl)lysine from octanoyl-[acyl-carrier-protein]: step 2/2. Catalyzes the radical-mediated insertion of two sulfur atoms into the C-6 and C-8 positions of the octanoyl moiety bound to the lipoyl domains of lipoate-dependent enzymes, thereby converting the octanoylated domains into lipoylated derivatives. The polypeptide is Lipoyl synthase (Serratia proteamaculans (strain 568)).